Reading from the N-terminus, the 227-residue chain is MECFKTTLAGVVLVVLLLQQAPVLRANDPDPLQDFCVADLDSEVTLNGYPCKPTPAAGDEFLFSSRLATGGDVNANPNGSNVTQLDVAGWPGVNTLGVSMNRIDFAPGGTNPPHVHPRATEVGIVLRGELLVGIIGSLDTGNRYYSRVVRGGETFVIPRGLMHFQFNVGKTEATMVVSFNSQNPGIVFVPLTLFGSNPPIPTPVLVKALRVDAGVVELLKSKFTGGY.

An N-terminal signal peptide occupies residues 1 to 26 (MECFKTTLAGVVLVVLLLQQAPVLRA). Cys-36 and Cys-51 are disulfide-bonded. The region spanning 65 to 217 (SRLATGGDVN…ALRVDAGVVE (153 aa)) is the Cupin type-1 domain. Asn-78 and Asn-81 each carry an N-linked (GlcNAc...) asparagine glycan. Residues His-114, His-116, Glu-121, and His-163 each contribute to the Mn(2+) site.

It belongs to the germin family. As to quaternary structure, oligomer (believed to be a pentamer but probably hexamer).

It localises to the secreted. Its subcellular location is the extracellular space. The protein resides in the apoplast. Functionally, may play a role in plant defense. Probably has no oxalate oxidase activity even if the active site is conserved. In Oryza sativa subsp. japonica (Rice), this protein is Germin-like protein 3-3.